We begin with the raw amino-acid sequence, 67 residues long: Beta-defensin 9 (67 aa).

A signal peptide spans 1-24 (MRTLCSLLLICCLLFSYTTPAANS). 3 disulfides stabilise this stretch: C34/C62, C41/C55, and C45/C63.

The protein belongs to the beta-defensin family. As to expression, weakly expressed in adult and neonatal brain.

It localises to the secreted. Has antibacterial activity. This Mus musculus (Mouse) protein is Beta-defensin 9 (Defb9).